The primary structure comprises 483 residues: Cyclic AMP-dependent transcription factor ATF-7 (483 aa).

Residues 1–285 are transactivation domain; sequence MGDDRPFVCN…GMVVGTASTM (285 aa). The segment at 7-31 adopts a C2H2-type zinc-finger fold; the sequence is FVCNAPGCGQRFTNEDHLAVHKHKH. Thr-51 bears the Phosphothreonine; by MAPK11 mark. Residues Thr-53 and Thr-101 each carry the phosphothreonine modification. A Glycyl lysine isopeptide (Lys-Gly) (interchain with G-Cter in SUMO1) cross-link involves residue Lys-107. Disordered stretches follow at residues 110–148 and 299–345; these read EPVE…TPTP and HPDA…NRAA. Composition is skewed to low complexity over residues 114–126 and 307–320; these read VDSS…ASSP and QPQV…PSTG. Residues 325–483 form an essential for binding adenovirus 2 E1A region; the sequence is RTVDEDPDER…MTPQSQSAGR (159 aa). Over residues 326 to 343 the composition is skewed to basic and acidic residues; sequence TVDEDPDERRQRFLERNR. The bZIP domain occupies 332 to 395; the sequence is DERRQRFLER…AQLKQLLLAH (64 aa). Residues 334–354 are basic motif; it reads RRQRFLERNRAAASRCRQKRK. Positions 360–388 are leucine-zipper; sequence LEKKAEELTSQNIQLSNEVTLLRNEVAQL. Positions 407-439 are disordered; it reads TQGYLESPKESSEPTGSPAPVIQHSSATAPSNG. A phosphoserine mark is found at Ser-413 and Ser-423. The segment covering 429-439 has biased composition (polar residues); that stretch reads QHSSATAPSNG.

This sequence belongs to the bZIP family. As to quaternary structure, homodimer; binds DNA as homodimer. Heterodimer; heterodimerizes with other members of ATF family and with JUN family members. Interacts with JNK2; the interaction does not phosphorylate ATF7 but acts as a docking site for other ATF-associated partners such as JUN family members. Interacts (via its transactivation domain) with TAF12 (isoforms TAFII15 and TAFII20); the interaction potentiates the transactivation activity (isoform TAFII20 only) and is inhibited by ATF7 sumoylation. Interacts with TAF4; the interaction inhibits the TAF12-dependent transactivation. Interacts with MAPK9; the interaction does not phosphorylate ATF7 but acts as a docking site for ATF7-associated partners such as JUN. Interacts with Ku complex components XRCC6 and XRCC7. Interacts with TERT. In terms of assembly, (Microbial infection) Interacts with adenovirus 2 E1A; the interaction enhances the ATF7-mediated viral transactivation activity which requires the zinc-binding domains of both E1A and ATF7. On EGF stimulation, phosphorylated first on Thr-53 allowing subsequent phosphorylation on Thr-51. This latter phosphorylation prevents sumoylation, increases binding to TAF12 and enhances transcriptional activity. Post-translationally, sumoylation delays nuclear localization and inhibits transactivation activity through preventing binding to TAF12. RANBP2 appears to be the specific E3 ligase. In terms of processing, on EGF stimulation, phosphorylated first on Thr-53 allowing subsequent phosphorylation on Thr-51. This latter phosphorylation prevents sumoylation, increases binding to TAF12 and enhances transcriptional activity. Social isolation stress as well as TNF-alpha also induce the phosphorylation of ATF7. Phosphorylated in proliferating colonic and small intestinal epithelial cells. In terms of tissue distribution, expressed in various tissues including heart, brain, placenta, lung and skeletal muscle. Highest levels in skeletal muscle. Lowest in lung and placenta. Strongly expressed in skeletal muscle. Also expressed at lower levels in heart and lung.

The protein resides in the nucleus. The protein localises to the nucleoplasm. It is found in the chromosome. Its subcellular location is the telomere. It localises to the cytoplasm. Stress-responsive chromatin regulator that plays a role in various biological processes including innate immunological memory, adipocyte differentiation or telomerase regulation. In absence of stress, contributes to the formation of heterochromatin and heterochromatin-like structure by recruiting histone H3K9 tri- and di-methyltransferases thus silencing the transcription of target genes such as STAT1 in adipocytes, or genes involved in innate immunity in macrophages and adipocytes. Stress induces ATF7 phosphorylation that disrupts interactions with histone methyltransferase and enhances the association with coactivators containing histone acetyltransferase and/or histone demethylase, leading to disruption of the heterochromatin-like structure and subsequently transcriptional activation. In response to TNF-alpha, which is induced by various stresses, phosphorylated ATF7 and telomerase are released from telomeres leading to telomere shortening. Also plays a role in maintaining epithelial regenerative capacity and protecting against cell death during intestinal epithelial damage and repair. Functionally, acts as a dominant repressor of the E-selectin/NF-ELAM1/delta-A promoter. Its function is as follows. Acts as a negative regulator, inhibiting both ATF2 and ATF7 transcriptional activities. It may exert these effects by sequestrating in the cytoplasm the Thr-53 phosphorylating kinase, preventing activation. This chain is Cyclic AMP-dependent transcription factor ATF-7 (ATF7), found in Homo sapiens (Human).